The primary structure comprises 478 residues: Cysteine--tRNA ligase (478 aa).

C29 lines the Zn(2+) pocket. The 'HIGH' region signature appears at 31–41 (VTVYDYCHLGH). Residues C213, H238, and E242 each coordinate Zn(2+). The 'KMSKS' region motif lies at 270-274 (KMSKS). An ATP-binding site is contributed by K273.

This sequence belongs to the class-I aminoacyl-tRNA synthetase family. In terms of assembly, monomer. The cofactor is Zn(2+).

The protein resides in the cytoplasm. It catalyses the reaction tRNA(Cys) + L-cysteine + ATP = L-cysteinyl-tRNA(Cys) + AMP + diphosphate. This is Cysteine--tRNA ligase from Synechococcus sp. (strain ATCC 27144 / PCC 6301 / SAUG 1402/1) (Anacystis nidulans).